We begin with the raw amino-acid sequence, 447 residues long: Probable alpha-galactosidase B (447 aa).

An N-terminal signal peptide occupies residues Met-1–Arg-25. 2 cysteine pairs are disulfide-bonded: Cys-45/Cys-77 and Cys-127/Cys-157. The active-site Nucleophile is Asp-155. N-linked (GlcNAc...) asparagine glycans are attached at residues Asn-162 and Asn-180. Substrate is bound at residue Glu-225–Ala-229. Residue Asn-236 is glycosylated (N-linked (GlcNAc...) asparagine). Residue Asp-247 is the Proton donor of the active site. Residue Asn-286 is glycosylated (N-linked (GlcNAc...) asparagine).

Belongs to the glycosyl hydrolase 27 family.

Its subcellular location is the secreted. It carries out the reaction Hydrolysis of terminal, non-reducing alpha-D-galactose residues in alpha-D-galactosides, including galactose oligosaccharides, galactomannans and galactolipids.. Functionally, hydrolyzes a variety of simple alpha-D-galactoside as well as more complex molecules such as oligosaccharides and polysaccharides. The chain is Probable alpha-galactosidase B (aglB) from Aspergillus fumigatus (strain ATCC MYA-4609 / CBS 101355 / FGSC A1100 / Af293) (Neosartorya fumigata).